The chain runs to 189 residues: Ras-like protein 1 (189 aa).

10 to 17 (GAGGVGKS) lines the GTP pocket. The Effector region signature appears at 32–40 (YDPTIEDSY). GTP is bound by residues 57 to 61 (DTAGQ) and 116 to 119 (NKCD). C186 carries the cysteine methyl ester modification. C186 carries the S-geranylgeranyl cysteine lipid modification. A propeptide spans 187 to 189 (KML) (removed in mature form).

This sequence belongs to the small GTPase superfamily. Ras family.

Its subcellular location is the cell membrane. The enzyme catalyses GTP + H2O = GDP + phosphate + H(+). Its activity is regulated as follows. Alternates between an inactive form bound to GDP and an active form bound to GTP. Activated by a guanine nucleotide-exchange factor (GEF) and inactivated by a GTPase-activating protein (GAP). Its function is as follows. Ras proteins bind GDP/GTP and possess intrinsic GTPase activity. Plays a role in eye development by regulating cell growth, survival of postmitotic ommatidial cells and differentiation of photoreceptor cells. During larval development, mediates Ptth/tor signaling leading to the production of ecdysone, a hormone required for the initiation of metamorphosis. The chain is Ras-like protein 1 from Drosophila willistoni (Fruit fly).